A 167-amino-acid polypeptide reads, in one-letter code: Small ribosomal subunit protein uS5 (167 aa).

Residues 12-75 form the S5 DRBM domain; that stretch reads LQEKLIAVNR…EKARRNMVTV (64 aa).

This sequence belongs to the universal ribosomal protein uS5 family. Part of the 30S ribosomal subunit. Contacts proteins S4 and S8.

In terms of biological role, with S4 and S12 plays an important role in translational accuracy. Its function is as follows. Located at the back of the 30S subunit body where it stabilizes the conformation of the head with respect to the body. In Shewanella denitrificans (strain OS217 / ATCC BAA-1090 / DSM 15013), this protein is Small ribosomal subunit protein uS5.